The sequence spans 185 residues: Ribosome-recycling factor (185 aa).

Belongs to the RRF family.

Its subcellular location is the cytoplasm. Its function is as follows. Responsible for the release of ribosomes from messenger RNA at the termination of protein biosynthesis. May increase the efficiency of translation by recycling ribosomes from one round of translation to another. This chain is Ribosome-recycling factor, found in Rhodospirillum centenum (strain ATCC 51521 / SW).